A 464-amino-acid chain; its full sequence is Soluble pyridine nucleotide transhydrogenase (464 aa).

35–44 is a binding site for FAD; it reads DSRRQVGGNC.

This sequence belongs to the class-I pyridine nucleotide-disulfide oxidoreductase family. Requires FAD as cofactor.

It is found in the cytoplasm. The catalysed reaction is NAD(+) + NADPH = NADH + NADP(+). Functionally, conversion of NADPH, generated by peripheral catabolic pathways, to NADH, which can enter the respiratory chain for energy generation. The protein is Soluble pyridine nucleotide transhydrogenase of Pseudomonas putida (strain W619).